A 1852-amino-acid polypeptide reads, in one-letter code: Voltage-dependent L-type calcium channel subunit alpha-1S (1852 aa).

Residues Met-1–Ile-23 form a disordered region. Over Met-1–Lys-51 the chain is Cytoplasmic. One copy of the I repeat lies at Asn-38–Phe-337. Residues Pro-52–Val-70 form a helical membrane-spanning segment. The Extracellular portion of the chain corresponds to Tyr-71 to Gly-85. Residue Asn-79 is glycosylated (N-linked (GlcNAc...) asparagine). The chain crosses the membrane as a helical span at residues Leu-86–Ile-106. Over Ala-107 to Asp-115 the chain is Cytoplasmic. Residues Ala-116–Thr-136 traverse the membrane as a helical segment. Topologically, residues Val-137–Asp-160 are extracellular. A helical membrane pass occupies residues Val-161–Val-179. Residues Pro-180–Leu-196 lie on the Cytoplasmic side of the membrane. Residues Phe-197–Phe-218 form a helical membrane-spanning segment. At Lys-219–Gly-279 the chain is on the extracellular side. Disulfide bonds link Cys-226-Cys-254 and Cys-245-Cys-261. A glycan (N-linked (GlcNAc...) asparagine) is linked at Asn-257. Positions Phe-280–Val-301 form an intramembrane region, pore-forming. Residues Ser-290–Gly-293 carry the Selectivity filter of repeat I motif. Glu-292 contributes to the Ca(2+) binding site. Over Asn-302–Trp-309 the chain is Extracellular. The chain crosses the membrane as a helical span at residues Pro-310–Leu-330. Residues Gly-331 to Lys-432 lie on the Cytoplasmic side of the membrane. The segment at Gln-357 to Glu-374 is binding to the beta subunit. Residues Ser-393 and Ser-397 each carry the phosphoserine modification. The II repeat unit spans residues Asn-418–Leu-664. The helical transmembrane segment at Val-433–Ser-451 threads the bilayer. Residues Glu-452–His-462 lie on the Extracellular side of the membrane. The chain crosses the membrane as a helical span at residues Leu-463–Met-483. The Cytoplasmic segment spans residues Tyr-484 to Ser-494. The chain crosses the membrane as a helical span at residues Ile-495–Val-514. At Glu-515 to Gly-523 the chain is on the extracellular side. Residues Ile-524 to Trp-542 form a helical membrane-spanning segment. The Cytoplasmic segment spans residues Thr-543–Ser-561. The helical transmembrane segment at Leu-562 to Phe-581 threads the bilayer. The Extracellular segment spans residues Gly-582–Pro-601. An intramembrane region (pore-forming) is located at residues Gln-602–Gly-623. The Selectivity filter of repeat II signature appears at Thr-612 to Asp-615. Glu-614 contacts Ca(2+). Residues Ile-624–Pro-633 lie on the Extracellular side of the membrane. The helical transmembrane segment at Gly-634–Leu-653 threads the bilayer. Residues Asn-654–Thr-799 are Cytoplasmic-facing. 2 disordered regions span residues Lys-675–Glu-712 and Glu-731–Arg-757. Ser-687 is modified (phosphoserine; by PKA). The segment covering Leu-690–Gly-711 has biased composition (basic and acidic residues). Over residues Pro-742–Glu-751 the composition is skewed to acidic residues. An III repeat occupies Glu-768–Phe-1068. A helical transmembrane segment spans residues Trp-800–Ala-818. Topologically, residues Glu-819–Gln-830 are extracellular. The chain crosses the membrane as a helical span at residues Ile-831–Lys-850. Residues Met-851–Asn-866 lie on the Cytoplasmic side of the membrane. A helical transmembrane segment spans residues Tyr-867–Leu-885. The Extracellular portion of the chain corresponds to Glu-886 to Val-892. Residues Val-893–Ala-911 traverse the membrane as a helical segment. The Cytoplasmic segment spans residues Lys-912–Asn-930. The chain crosses the membrane as a helical span at residues Ile-931 to Phe-950. The Extracellular segment spans residues Lys-951–Val-1000. Cys-957 and Cys-968 form a disulfide bridge. The dihydropyridine binding stretch occupies residues Arg-988–Lys-1077. An intramembrane region (pore-forming) is located at residues Leu-1001 to Tyr-1021. A Selectivity filter of repeat III motif is present at residues Thr-1012–Gly-1015. Glu-1014 contacts Ca(2+). Topologically, residues Lys-1022 to Arg-1038 are extracellular. The chain crosses the membrane as a helical span at residues Val-1039–Phe-1060. At Val-1061–Ser-1118 the chain is on the cytoplasmic side. One copy of the IV repeat lies at Asn-1105–Phe-1384. Residues Tyr-1119–Tyr-1140 form a helical membrane-spanning segment. Asn-1141 carries N-linked (GlcNAc...) asparagine glycosylation. At Asn-1141–His-1148 the chain is on the extracellular side. The helical transmembrane segment at Ile-1149–Ile-1170 threads the bilayer. Residues Ala-1171–Asp-1180 are Cytoplasmic-facing. The helical transmembrane segment at Pro-1181–Ser-1200 threads the bilayer. Topologically, residues Glu-1201 to Ser-1231 are extracellular. Residues Ser-1232–Ala-1250 traverse the membrane as a helical segment. At Glu-1251–Pro-1268 the chain is on the cytoplasmic side. Residues Tyr-1269–Phe-1289 form a helical membrane-spanning segment. Topologically, residues Gly-1290–Gln-1311 are extracellular. Positions Ala-1312–Leu-1330 form an intramembrane region, pore-forming. The Selectivity filter of repeat IV motif lies at Thr-1321–Ala-1324. At Ala-1331–Phe-1356 the chain is on the extracellular side. Residues Leu-1337–Lys-1403 form a dihydropyridine binding region. A disulfide bridge connects residues Cys-1338 and Cys-1352. 2 phenylalkylamine binding regions span residues Glu-1349–Trp-1391 and Glu-1349–Ser-1392. A helical membrane pass occupies residues Ala-1357–Met-1381. Over Asp-1382–Pro-1852 the chain is Cytoplasmic. Residues Lys-1522–Glu-1542 are interaction with calmodulin. The residue at position 1575 (Ser-1575) is a Phosphoserine; by PKA and CAMK2. A Phosphothreonine modification is found at Thr-1579. A Phosphoserine; by PKA modification is found at Ser-1617. 2 disordered regions span residues Gly-1702–Lys-1721 and Thr-1727–Arg-1762. Positions Lys-1747–Lys-1757 are enriched in basic and acidic residues.

Belongs to the calcium channel alpha-1 subunit (TC 1.A.1.11) family. CACNA1S subfamily. In terms of assembly, component of a calcium channel complex consisting of a pore-forming alpha subunit (CACNA1S) and the ancillary subunits CACNB1 or CACNB2, CACNG1 and CACNA2D1. The channel complex contains alpha, beta, gamma and delta subunits in a 1:1:1:1 ratio, i.e. it contains either CACNB1 or CACNB2. CACNA1S channel activity is modulated by the auxiliary subunits (CACNB1 or CACNB2, CACNG1 and CACNA2D1). Interacts with DYSF and JSRP1. Interacts with RYR1. Interacts with STAC, STAC2 and STAC3 (via their SH3 domains). Interacts with CALM. In terms of processing, the alpha-1S subunit is found in two isoforms in the skeletal muscle: a minor form of 212 kDa containing the complete amino acid sequence, and a major form of 190 kDa derived from the full-length form by post-translational proteolysis close to Phe-1690. Phosphorylated. Phosphorylation by PKA activates the calcium channel. Both the minor and major forms are phosphorylated in vitro by PKA. Phosphorylation at Ser-1575 is involved in beta-adrenergic-mediated regulation of the channel.

The protein resides in the cell membrane. It is found in the sarcolemma. It localises to the T-tubule. The enzyme catalyses Ca(2+)(in) = Ca(2+)(out). Its activity is regulated as follows. Channel activity is blocked by dihydropyridines (DHP), phenylalkylamines, and by benzothiazepines. Functionally, pore-forming, alpha-1S subunit of the voltage-gated calcium channel that gives rise to L-type calcium currents in skeletal muscle. Calcium channels containing the alpha-1S subunit play an important role in excitation-contraction coupling in skeletal muscle via their interaction with RYR1, which triggers Ca(2+) release from the sarcplasmic reticulum and ultimately results in muscle contraction. Long-lasting (L-type) calcium channels belong to the 'high-voltage activated' (HVA) group. The sequence is that of Voltage-dependent L-type calcium channel subunit alpha-1S (Cacna1s) from Mus musculus (Mouse).